The following is a 450-amino-acid chain: Phosphoglucosamine mutase (450 aa).

Catalysis depends on S101, which acts as the Phosphoserine intermediate. 4 residues coordinate Mg(2+): S101, D240, D242, and D244. Position 101 is a phosphoserine (S101).

It belongs to the phosphohexose mutase family. The cofactor is Mg(2+). Activated by phosphorylation.

The catalysed reaction is alpha-D-glucosamine 1-phosphate = D-glucosamine 6-phosphate. In terms of biological role, catalyzes the conversion of glucosamine-6-phosphate to glucosamine-1-phosphate. The sequence is that of Phosphoglucosamine mutase from Streptococcus pneumoniae (strain JJA).